The primary structure comprises 614 residues: UvrABC system protein C (614 aa).

Positions 14–91 constitute a GIY-YIG domain; sequence TSPGCYIHKD…IKENKPKYNI (78 aa). The region spanning 196–231 is the UVR domain; the sequence is DKIIDDLKSKMAVAAQSMEFERAAEYRDLIQAIGTL. A disordered region spans residues 595 to 614; it reads LPQVAEERVDYQTEGNHNEP. The span at 599-614 shows a compositional bias: basic and acidic residues; sequence AEERVDYQTEGNHNEP.

Belongs to the UvrC family. As to quaternary structure, interacts with UvrB in an incision complex.

The protein resides in the cytoplasm. Functionally, the UvrABC repair system catalyzes the recognition and processing of DNA lesions. UvrC both incises the 5' and 3' sides of the lesion. The N-terminal half is responsible for the 3' incision and the C-terminal half is responsible for the 5' incision. This chain is UvrABC system protein C, found in Streptococcus pneumoniae serotype 4 (strain ATCC BAA-334 / TIGR4).